A 553-amino-acid chain; its full sequence is Glycerol kinase 2 (553 aa).

Residue Thr20 coordinates substrate. Position 24 (Arg24) interacts with ATP. The substrate site is built by Arg94, Tyr148, and Asp259. Residues Thr281, Gly326, and Gly427–Asn431 each bind ATP. Residues Ile526–Ala546 form a helical membrane-spanning segment.

Belongs to the FGGY kinase family. Interacts with ARMC12 and PLD6.

It is found in the mitochondrion outer membrane. The protein localises to the cytoplasm. The catalysed reaction is glycerol + ATP = sn-glycerol 3-phosphate + ADP + H(+). Its pathway is polyol metabolism; glycerol degradation via glycerol kinase pathway; sn-glycerol 3-phosphate from glycerol: step 1/1. Key enzyme in the regulation of glycerol uptake and metabolism. Essential for male fertility and sperm mitochondrial sheath formation. Required for proper arrangement of crescent-like mitochondria to form the mitochondrial sheath during spermatogenesis. Can induce mitochondrial clustering through interactions with PLD6 and up-regulation of phosphatidic acid synthesis in the mitochondria. The protein is Glycerol kinase 2 (GK2) of Macaca fascicularis (Crab-eating macaque).